A 261-amino-acid polypeptide reads, in one-letter code: 6-phosphogluconolactonase (261 aa).

It belongs to the glucosamine/galactosamine-6-phosphate isomerase family. 6-phosphogluconolactonase subfamily.

It carries out the reaction 6-phospho-D-glucono-1,5-lactone + H2O = 6-phospho-D-gluconate + H(+). The protein operates within carbohydrate degradation; pentose phosphate pathway; D-ribulose 5-phosphate from D-glucose 6-phosphate (oxidative stage): step 2/3. Functionally, hydrolysis of 6-phosphogluconolactone to 6-phosphogluconate. The polypeptide is 6-phosphogluconolactonase (pgl) (Streptomyces coelicolor (strain ATCC BAA-471 / A3(2) / M145)).